A 291-amino-acid polypeptide reads, in one-letter code: uncharacterized protein (291 aa).

It to E.cuniculi ECU03_0120.

This is an uncharacterized protein from Encephalitozoon cuniculi (strain GB-M1) (Microsporidian parasite).